The sequence spans 361 residues: Peptide chain release factor 1 (361 aa).

N5-methylglutamine is present on Gln-236.

This sequence belongs to the prokaryotic/mitochondrial release factor family. Methylated by PrmC. Methylation increases the termination efficiency of RF1.

It localises to the cytoplasm. Its function is as follows. Peptide chain release factor 1 directs the termination of translation in response to the peptide chain termination codons UAG and UAA. In Lactobacillus delbrueckii subsp. bulgaricus (strain ATCC 11842 / DSM 20081 / BCRC 10696 / JCM 1002 / NBRC 13953 / NCIMB 11778 / NCTC 12712 / WDCM 00102 / Lb 14), this protein is Peptide chain release factor 1.